The primary structure comprises 447 residues: Voltage-gated purine nucleotide uniporter SLC17A9 (447 aa).

The interval 1-26 (MPSQRSSLMQPIPEETRKTPSAAAED) is disordered. 11 consecutive transmembrane segments (helical) span residues 40–60 (ILLLGTCLLYCARVTMPVCTV), 74–94 (GIVLSSFFWGYCLTQVVGGHL), 103–123 (VILLSASAWGFITVTTPLLAH), 129–149 (LAFLTFSRILTGLLQGVYFPA), 169–189 (TVGAGSQVGTLVTGGVGSVLL), 192–212 (CGWQSVFYFSGGLTLLWAYYV), 252–272 (VWAAICSQLCSACSFFILLSW), 287–307 (WVFNVVPWMLAIPASLFSGFI), 327–347 (VMGLGLSSIFALCLGHTTSFL), 380–400 (GFLFGVANTAGALAGVVGVCL), and 413–433 (CVFHLVAIISNLGLGTFLVFG).

The protein belongs to the major facilitator superfamily. Sodium/anion cotransporter family. As to expression, in brain, specifically expressed in the medulla and is associated with chromaffin granules (at protein level). Predominantly expressed in adrenal gland, brain and thyroid.

The protein resides in the cytoplasmic vesicle. It localises to the secretory vesicle. Its subcellular location is the chromaffin granule membrane. It is found in the secretory vesicle membrane. The protein localises to the lysosome membrane. The catalysed reaction is ATP(in) = ATP(out). It catalyses the reaction ADP(in) = ADP(out). It carries out the reaction GTP(in) = GTP(out). With respect to regulation, activity is chloride-dependent. Voltage-gated ATP nucleotide uniporter that can also transport the purine nucleotides ADP and GTP. Uses the membrane potential as the driving force to control ATP accumulation in lysosomes and secretory vesicles. By controlling ATP storage in lysosomes, regulates ATP-dependent proteins of these organelles. Also indirectly regulates the exocytosis of ATP through its import into lysosomes in astrocytes and secretory vesicles such as adrenal chromaffin granules, mucin granules and synaptic vesicles. The polypeptide is Voltage-gated purine nucleotide uniporter SLC17A9 (Mus musculus (Mouse)).